The sequence spans 669 residues: Acetyl-coenzyme A synthetase (669 aa).

CoA contacts are provided by residues 211–214 and threonine 329; that span reads RGGK. ATP-binding positions include 404–406, 428–433, aspartate 519, and arginine 534; these read GEP and DTYWQT. CoA is bound at residue serine 542. ATP is bound at residue arginine 545. Arginine 602 lines the CoA pocket.

It belongs to the ATP-dependent AMP-binding enzyme family.

It catalyses the reaction acetate + ATP + CoA = acetyl-CoA + AMP + diphosphate. The protein operates within ketone degradation; acetoin degradation. Its pathway is antibiotic biosynthesis; penicillin biosynthesis. The sequence is that of Acetyl-coenzyme A synthetase (facA) from Penicillium chrysogenum (Penicillium notatum).